The sequence spans 546 residues: Low-affinity methionine permease (546 aa).

The Extracellular portion of the chain corresponds to 1 to 70 (MEPLLFNSGK…QGRHLGVFST (70 aa)). A helical transmembrane segment spans residues 71 to 91 (VVLFVSRIMGSGIFAVPSVIL). Topologically, residues 92-98 (LNTGGNK) are cytoplasmic. A helical transmembrane segment spans residues 99–119 (LIYFAIWVFSAAIAFAGLYLF). At 120–148 (LEFGSWIPKSGGRKNFLERSFERPRLLIS) the chain is on the extracellular side. A helical membrane pass occupies residues 149–169 (VVFSCYSVLTGYALTGSIVFG). Over 170 to 188 (KYVLSAFGVTDDSWSKYVS) the chain is Cytoplasmic. Residues 189 to 209 (ISFIIFAVLIHGVSVRHGVFI) form a helical membrane-spanning segment. Residues 210–213 (QNAL) lie on the Extracellular side of the membrane. The chain crosses the membrane as a helical span at residues 214–234 (GGLKLIMIVLMCFAGLYTLFF). Residues 235-254 (YKSTGQVAWDLPVTQVEKDS) are Cytoplasmic-facing. The chain crosses the membrane as a helical span at residues 255-275 (LLSVSSIATAFISSFFCFSGW). Residues 276-297 (DTVHTVTSEIKNPVKTLKVSGP) lie on the Extracellular side of the membrane. Residues 298–318 (LSLIICFVCYTMMNVAYLKVL) form a helical membrane-spanning segment. Position 319 (Thr-319) is a topological domain, cytoplasmic. Residues 320-340 (YEEIVSAGPLVGSVLFTKLFG) form a helical membrane-spanning segment. Over 341 to 346 (PRVGGK) the chain is Extracellular. Residues 347–367 (FIAFSIAISAASNILVVIYSI) traverse the membrane as a helical segment. Over 368 to 393 (SRVNQEIFKEGYLPFSIHMSKNWPFD) the chain is Cytoplasmic. A helical membrane pass occupies residues 394 to 414 (APLPSISLCGFITIAWILILP). The Extracellular segment spans residues 415–423 (KEGESFNYL). A helical membrane pass occupies residues 424–444 (VSMDGYGNQFFLLLVAIGLFI). At 445–459 (WRFKHKNEVPEIRAS) the chain is on the cytoplasmic side. The chain crosses the membrane as a helical span at residues 460-480 (TFGVLAIITLSLYMLMAPFFA). At 481–494 (DPSLNRVGFLPPYQ) the chain is on the extracellular side. The chain crosses the membrane as a helical span at residues 495–515 (IMSLLVIVACFFFWLVKFVLL). The Cytoplasmic portion of the chain corresponds to 516-546 (PKFFHYKLLPKITYLHDGLIVTEWVKKPCLC).

To yeast high affinity methionine permease (MUP1).

Its subcellular location is the membrane. Its function is as follows. Very low affinity permease for methionine. This chain is Low-affinity methionine permease (MUP3), found in Saccharomyces cerevisiae (strain ATCC 204508 / S288c) (Baker's yeast).